The following is a 185-amino-acid chain: Transcription termination/antitermination protein NusG (185 aa).

Residues 134 to 164 (VGKRVRIVDGAFSGFEAPITEINGDKLTLTV) enclose the KOW domain.

The protein belongs to the NusG family.

In terms of biological role, participates in transcription elongation, termination and antitermination. The protein is Transcription termination/antitermination protein NusG of Lactococcus lactis subsp. lactis (strain IL1403) (Streptococcus lactis).